The chain runs to 100 residues: NADH-quinone oxidoreductase subunit K (100 aa).

Helical transmembrane passes span 2-22 (IPLQ…LTGV), 28-48 (LLFM…AFVV), and 60-80 (VMFI…LALL).

Belongs to the complex I subunit 4L family. In terms of assembly, NDH-1 is composed of 13 different subunits. Subunits NuoA, H, J, K, L, M, N constitute the membrane sector of the complex.

It is found in the cell inner membrane. It catalyses the reaction a quinone + NADH + 5 H(+)(in) = a quinol + NAD(+) + 4 H(+)(out). Functionally, NDH-1 shuttles electrons from NADH, via FMN and iron-sulfur (Fe-S) centers, to quinones in the respiratory chain. The immediate electron acceptor for the enzyme in this species is believed to be ubiquinone. Couples the redox reaction to proton translocation (for every two electrons transferred, four hydrogen ions are translocated across the cytoplasmic membrane), and thus conserves the redox energy in a proton gradient. The chain is NADH-quinone oxidoreductase subunit K from Erwinia tasmaniensis (strain DSM 17950 / CFBP 7177 / CIP 109463 / NCPPB 4357 / Et1/99).